Consider the following 494-residue polypeptide: Acetylcholine receptor subunit epsilon (494 aa).

The N-terminal stretch at 1-20 (MTMALLGTLLLLALFGRSQG) is a signal peptide. Over 21–239 (KNEELSLYHH…VIYTLIIRRK (219 aa)) the chain is Extracellular. Residues Asn-86 and Asn-161 are each glycosylated (N-linked (GlcNAc...) asparagine). Cys-148 and Cys-162 form a disulfide bridge. Residues 240–264 (PLFYVINIIVPCVLISGLVLLAYFL) traverse the membrane as a helical segment. The Cytoplasmic segment spans residues 265–272 (PAQAGGQK). Residues 273 to 291 (CTVSINVLLAQTVFLFLIA) form a helical membrane-spanning segment. Over 292 to 306 (QKIPETSLSVPLLGR) the chain is Extracellular. A helical transmembrane segment spans residues 307 to 328 (YLIFVMVVATLIVMNCVIVLNV). Residues 329–457 (SLRTPTTHAT…WVRMGKALDN (129 aa)) lie on the Cytoplasmic side of the membrane. A helical transmembrane segment spans residues 458 to 481 (VCFWAALVLFSVGSTLIFLGGYFN). Residues 482-494 (QVPDLPYPPCIQP) are Extracellular-facing.

Belongs to the ligand-gated ion channel (TC 1.A.9) family. Acetylcholine receptor (TC 1.A.9.1) subfamily. Epsilon/CHRNE sub-subfamily. Pentamer of two alpha chains, and one each of the beta, delta, and gamma (in immature muscle) or epsilon (in mature muscle) chains. The muscle heteropentamer composed of alpha-1, beta-1, delta, epsilon subunits interacts with the alpha-conotoxin ImII.

Its subcellular location is the postsynaptic cell membrane. It is found in the cell membrane. The enzyme catalyses K(+)(in) = K(+)(out). It catalyses the reaction Na(+)(in) = Na(+)(out). Functionally, after binding acetylcholine, the AChR responds by an extensive change in conformation that affects all subunits and leads to opening of an ion-conducting channel across the plasma membrane. This chain is Acetylcholine receptor subunit epsilon (Chrne), found in Rattus norvegicus (Rat).